Consider the following 192-residue polypeptide: MRVVLLGPPGAGKGTQAKMLTEEYNIPHLSTGDMLREVIAKETEVGKKAKAIISSGALVPDSIVNQIVSDRIDEADCINGFILDGYPRTVGQAEALQQILESKNMRLDAVIELCVNEDALIERMERRVQETVAAGGQVRLDDNPVAFAKRLVEYREKTSPLSKFYSERGMLKVIDGMIGIAEVTRIIKGFLS.

10-15 serves as a coordination point for ATP; that stretch reads GAGKGT. The NMP stretch occupies residues 30 to 59; sequence STGDMLREVIAKETEVGKKAKAIISSGALV. Residues threonine 31, arginine 36, 57–59, 85–88, and glutamine 92 each bind AMP; these read ALV and GYPR. The segment at 126–142 is LID; the sequence is RRVQETVAAGGQVRLDD. Arginine 127 lines the ATP pocket. 2 residues coordinate AMP: arginine 139 and arginine 150. Residue isoleucine 178 coordinates ATP.

The protein belongs to the adenylate kinase family. In terms of assembly, monomer.

It is found in the cytoplasm. The catalysed reaction is AMP + ATP = 2 ADP. It functions in the pathway purine metabolism; AMP biosynthesis via salvage pathway; AMP from ADP: step 1/1. Functionally, catalyzes the reversible transfer of the terminal phosphate group between ATP and AMP. Plays an important role in cellular energy homeostasis and in adenine nucleotide metabolism. This chain is Adenylate kinase, found in Bartonella tribocorum (strain CIP 105476 / IBS 506).